Reading from the N-terminus, the 416-residue chain is Ena/VASP-like protein (416 aa).

Residues 1–112 (MSEQSICQAR…NAMLFALNIM (112 aa)) form the WH1 domain. The span at 114–129 (SQEGGPSSQRQVQNGP) shows a compositional bias: polar residues. Disordered regions lie at residues 114 to 133 (SQEGGPSSQRQVQNGPSPDE) and 141 to 369 (VMEQ…PAGS). Serine 130 carries the phosphoserine modification. The segment covering 141–157 (VMEQHQQQRQESLERRT) has biased composition (basic and acidic residues). Over residues 169–180 (PSSAASAPVSCS) the composition is skewed to low complexity. Residues 181 to 206 (GPPPPPPPPVPPPPTGATPPPPPPLP) are compositionally biased toward pro residues. Residues 222-242 (GLAAAIAGAKLRRVQRPEDAS) are EVH2 block A. The interval 222 to 413 (GLAAAIAGAK…DAIRQELSGI (192 aa)) is EVH2. The KLKR signature appears at 231–234 (KLRR). Residues 242 to 253 (SGGSSPSGTSKS) are compositionally biased toward low complexity. 2 positions are modified to phosphoserine: serine 246 and serine 259. Positions 265–282 (GGLMEEMNKLLAKRRKAA) are EVH2 block B. The segment covering 299–320 (EDPSTSPSPGTRAASQPPNSSE) has biased composition (polar residues). Phosphoserine is present on residues serine 304, serine 306, serine 329, serine 331, serine 341, serine 349, serine 354, and serine 369. A compositionally biased stretch (basic and acidic residues) spans 321–331 (AGRKPWERSNS). Positions 342 to 362 (RTPSVAKSPEAKSPLQSQPHS) are required for interaction with ZDHHC17. The EVH2 block C stretch occupies residues 379-413 (DLDRMKQEILEEVVRELHKVKEEIIDAIRQELSGI).

It belongs to the Ena/VASP family. In terms of assembly, homotetramer. Binds to the SH3 domains of ABL1, LYN and SRC. Also binds to profilin, with preference for isoform IIa of PFN2, and the WW domain of APBB1/FE65. Binds to SEMA6A. Interacts, via the Pro-rich region, with the C-terminal SH3 domain of DNMBP. Interacts with RAPH1. Binds, via the EVH1 domain, the Pro-rich domain of Listeria monocytogenes actA. Binds, via the EVH1 domain, the Pro-rich domain of ZYX. Interacts with FYB1. Interacts with ZDHHC17. Post-translationally, phosphorylated by PKA; phosphorylation abolishes binding to SH3 domains of ABL and SRC.

The protein resides in the cytoplasm. The protein localises to the cytoskeleton. It is found in the stress fiber. It localises to the cell projection. Its subcellular location is the lamellipodium. Ena/VASP proteins are actin-associated proteins involved in a range of processes dependent on cytoskeleton remodeling and cell polarity such as axon guidance and lamellipodial and filopodial dynamics in migrating cells. EVL enhances actin nucleation and polymerization. This is Ena/VASP-like protein (EVL) from Homo sapiens (Human).